The following is a 495-amino-acid chain: Acetyl-coenzyme A carboxylase carboxyl transferase subunit beta, chloroplastic (495 aa).

Positions 187 to 208 (ESRNSSENEGSSRRTRTKGSDL) are disordered. The CoA carboxyltransferase N-terminal domain occupies 226 to 495 (LWVQCENCYG…PLNQKSSKIK (270 aa)). Positions 230, 233, 249, and 252 each coordinate Zn(2+). The C4-type zinc-finger motif lies at 230 to 252 (CENCYGLNYKKFLKSKMNICEQC).

The protein belongs to the AccD/PCCB family. In terms of assembly, acetyl-CoA carboxylase is a heterohexamer composed of biotin carboxyl carrier protein, biotin carboxylase and 2 subunits each of ACCase subunit alpha and ACCase plastid-coded subunit beta (accD). Zn(2+) serves as cofactor. RNA expressed in leaf, root and stem; the least expression occurs in stems.

The protein localises to the plastid. Its subcellular location is the chloroplast stroma. It carries out the reaction N(6)-carboxybiotinyl-L-lysyl-[protein] + acetyl-CoA = N(6)-biotinyl-L-lysyl-[protein] + malonyl-CoA. The protein operates within lipid metabolism; malonyl-CoA biosynthesis; malonyl-CoA from acetyl-CoA: step 1/1. Component of the acetyl coenzyme A carboxylase (ACC) complex. Biotin carboxylase (BC) catalyzes the carboxylation of biotin on its carrier protein (BCCP) and then the CO(2) group is transferred by the transcarboxylase to acetyl-CoA to form malonyl-CoA. The chain is Acetyl-coenzyme A carboxylase carboxyl transferase subunit beta, chloroplastic from Nicotiana tabacum (Common tobacco).